We begin with the raw amino-acid sequence, 53 residues long: UPF0391 membrane protein GFO_1615 (53 aa).

Helical transmembrane passes span 4–24 (LIVIFLIIAIIAAIFGFGGVA) and 27–47 (AADIAKIIFYIFLVLLVISVL).

The protein belongs to the UPF0391 family.

Its subcellular location is the cell membrane. The polypeptide is UPF0391 membrane protein GFO_1615 (Christiangramia forsetii (strain DSM 17595 / CGMCC 1.15422 / KT0803) (Gramella forsetii)).